A 271-amino-acid polypeptide reads, in one-letter code: Formamidopyrimidine-DNA glycosylase (271 aa).

P2 (schiff-base intermediate with DNA) is an active-site residue. The active-site Proton donor is the E3. The Proton donor; for beta-elimination activity role is filled by K58. DNA contacts are provided by H90, R108, and R151. The segment at 236-271 adopts an FPG-type; degenerate zinc-finger fold; that stretch reads QVYGRDGQPCHRDDGGTIRRFAQGGRSTWYCPRCQR. The active-site Proton donor; for delta-elimination activity is R261.

The protein belongs to the FPG family. In terms of assembly, monomer. Requires Zn(2+) as cofactor.

It carries out the reaction Hydrolysis of DNA containing ring-opened 7-methylguanine residues, releasing 2,6-diamino-4-hydroxy-5-(N-methyl)formamidopyrimidine.. The enzyme catalyses 2'-deoxyribonucleotide-(2'-deoxyribose 5'-phosphate)-2'-deoxyribonucleotide-DNA = a 3'-end 2'-deoxyribonucleotide-(2,3-dehydro-2,3-deoxyribose 5'-phosphate)-DNA + a 5'-end 5'-phospho-2'-deoxyribonucleoside-DNA + H(+). Functionally, involved in base excision repair of DNA damaged by oxidation or by mutagenic agents. Acts as a DNA glycosylase that recognizes and removes damaged bases. Has a preference for oxidized purines, such as 7,8-dihydro-8-oxoguanine (8-oxoG). Has AP (apurinic/apyrimidinic) lyase activity and introduces nicks in the DNA strand. Cleaves the DNA backbone by beta-delta elimination to generate a single-strand break at the site of the removed base with both 3'- and 5'-phosphates. The protein is Formamidopyrimidine-DNA glycosylase of Erythrobacter litoralis (strain HTCC2594).